Reading from the N-terminus, the 206-residue chain is ATP-dependent Clp protease proteolytic subunit 2 (206 aa).

Catalysis depends on Ser-100, which acts as the Nucleophile. Residue His-125 is part of the active site.

Belongs to the peptidase S14 family. As to quaternary structure, fourteen ClpP subunits assemble into 2 heptameric rings which stack back to back to give a disk-like structure with a central cavity, resembling the structure of eukaryotic proteasomes.

The protein resides in the cytoplasm. It carries out the reaction Hydrolysis of proteins to small peptides in the presence of ATP and magnesium. alpha-casein is the usual test substrate. In the absence of ATP, only oligopeptides shorter than five residues are hydrolyzed (such as succinyl-Leu-Tyr-|-NHMec, and Leu-Tyr-Leu-|-Tyr-Trp, in which cleavage of the -Tyr-|-Leu- and -Tyr-|-Trp bonds also occurs).. Its function is as follows. Cleaves peptides in various proteins in a process that requires ATP hydrolysis. Has a chymotrypsin-like activity. Plays a major role in the degradation of misfolded proteins. This is ATP-dependent Clp protease proteolytic subunit 2 from Myxococcus xanthus.